The chain runs to 399 residues: Tyrosine--tRNA ligase (399 aa).

A 'HIGH' region motif is present at residues 42–51 (PTAPDLHLGH). A 'KMSKS' region motif is present at residues 226-230 (KMSKS). Position 229 (K229) interacts with ATP. The 62-residue stretch at 337–398 (LPVFQVVKQA…GKRKFASVVL (62 aa)) folds into the S4 RNA-binding domain.

The protein belongs to the class-I aminoacyl-tRNA synthetase family. TyrS type 2 subfamily. As to quaternary structure, homodimer.

The protein resides in the cytoplasm. The catalysed reaction is tRNA(Tyr) + L-tyrosine + ATP = L-tyrosyl-tRNA(Tyr) + AMP + diphosphate + H(+). Functionally, catalyzes the attachment of tyrosine to tRNA(Tyr) in a two-step reaction: tyrosine is first activated by ATP to form Tyr-AMP and then transferred to the acceptor end of tRNA(Tyr). This Aromatoleum aromaticum (strain DSM 19018 / LMG 30748 / EbN1) (Azoarcus sp. (strain EbN1)) protein is Tyrosine--tRNA ligase.